Reading from the N-terminus, the 343-residue chain is MKALAKLERAPGLTLTDVKKPEVGHNDVMIRITRTAICGTDIHIWKWDDWAQKTIPVPMHVGHEYVGEIVEMGQEVRGFAIGDRVSGEGHITCGFCRNCRAGRRHLCRNTVGVGVNREGAFAEYLVIPAFNAFKIPPEISDDLAAIFDPFGNATHTALSFNLVGEDVLITGAGPIGIMAVAIAKHVGARNVVITDVNDYRLELARKMGATRAVNVSRESLRDVMADLHMTEGFDVGLEMSGVPSAFTSMLEAMNHGGKIALLGIPPAQTAIDWTQVIFKGLEIKGIYGREMFETWYKMVAMLQSGLDLSPILTHHFKVDDYQEAFATMLSGESGKVILDWTAA.

C38 contributes to the Zn(2+) binding site. Residues T40 and H43 each act as charge relay system in the active site. Positions 63, 64, 93, 96, 99, and 107 each coordinate Zn(2+). Residues I175, D195, R200, 262 to 264 (LGI), and 286 to 287 (IY) contribute to the NAD(+) site.

Belongs to the zinc-containing alcohol dehydrogenase family. Homotetramer. The cofactor is Zn(2+).

It is found in the cytoplasm. The enzyme catalyses L-threonine + NAD(+) = (2S)-2-amino-3-oxobutanoate + NADH + H(+). The protein operates within amino-acid degradation; L-threonine degradation via oxydo-reductase pathway; glycine from L-threonine: step 1/2. Functionally, catalyzes the NAD(+)-dependent oxidation of L-threonine to 2-amino-3-ketobutyrate. The chain is L-threonine 3-dehydrogenase from Paraburkholderia phytofirmans (strain DSM 17436 / LMG 22146 / PsJN) (Burkholderia phytofirmans).